The following is a 370-amino-acid chain: NADH-quinone oxidoreductase subunit D 2 (370 aa).

The protein belongs to the complex I 49 kDa subunit family. In terms of assembly, NDH-1 is composed of 14 different subunits. Subunits NuoB, C, D, E, F, and G constitute the peripheral sector of the complex.

The protein resides in the cell membrane. The enzyme catalyses a quinone + NADH + 5 H(+)(in) = a quinol + NAD(+) + 4 H(+)(out). In terms of biological role, NDH-1 shuttles electrons from NADH, via FMN and iron-sulfur (Fe-S) centers, to quinones in the respiratory chain. The immediate electron acceptor for the enzyme in this species is believed to be ubiquinone. Couples the redox reaction to proton translocation (for every two electrons transferred, four hydrogen ions are translocated across the cytoplasmic membrane), and thus conserves the redox energy in a proton gradient. The protein is NADH-quinone oxidoreductase subunit D 2 of Herpetosiphon aurantiacus (strain ATCC 23779 / DSM 785 / 114-95).